We begin with the raw amino-acid sequence, 227 residues long: ATP synthase F(0) complex subunit a (227 aa).

6 helical membrane passes run phenylalanine 14–proline 34, tryptophan 69–leucine 89, leucine 99–phenylalanine 119, valine 139–valine 159, leucine 165–methionine 185, and alanine 190–isoleucine 210.

Belongs to the ATPase A chain family. In terms of assembly, component of the ATP synthase complex composed at least of ATP5F1A/subunit alpha, ATP5F1B/subunit beta, ATP5MC1/subunit c (homooctomer), MT-ATP6/subunit a, MT-ATP8/subunit 8, ATP5ME/subunit e, ATP5MF/subunit f, ATP5MG/subunit g, ATP5MK/subunit k, ATP5MJ/subunit j, ATP5F1C/subunit gamma, ATP5F1D/subunit delta, ATP5F1E/subunit epsilon, ATP5PF/subunit F6, ATP5PB/subunit b, ATP5PD/subunit d, ATP5PO/subunit OSCP. ATP synthase complex consists of a soluble F(1) head domain (subunits alpha(3) and beta(3)) - the catalytic core - and a membrane F(0) domain - the membrane proton channel (subunits c, a, 8, e, f, g, k and j). These two domains are linked by a central stalk (subunits gamma, delta, and epsilon) rotating inside the F1 region and a stationary peripheral stalk (subunits F6, b, d, and OSCP). Interacts with DNAJC30; interaction is direct.

The protein localises to the mitochondrion inner membrane. It catalyses the reaction H(+)(in) = H(+)(out). Subunit a, of the mitochondrial membrane ATP synthase complex (F(1)F(0) ATP synthase or Complex V) that produces ATP from ADP in the presence of a proton gradient across the membrane which is generated by electron transport complexes of the respiratory chain. ATP synthase complex consist of a soluble F(1) head domain - the catalytic core - and a membrane F(1) domain - the membrane proton channel. These two domains are linked by a central stalk rotating inside the F(1) region and a stationary peripheral stalk. During catalysis, ATP synthesis in the catalytic domain of F(1) is coupled via a rotary mechanism of the central stalk subunits to proton translocation. With the subunit c (ATP5MC1), forms the proton-conducting channel in the F(0) domain, that contains two crucial half-channels (inlet and outlet) that facilitate proton movement from the mitochondrial intermembrane space (IMS) into the matrix. Protons are taken up via the inlet half-channel and released through the outlet half-channel, following a Grotthuss mechanism. The chain is ATP synthase F(0) complex subunit a from Scyliorhinus canicula (Small-spotted catshark).